The following is a 694-amino-acid chain: Elongation factor G (694 aa).

The tr-type G domain maps to 8-283 (ERYRNIGIMA…AVIDYLPAPV (276 aa)). GTP contacts are provided by residues 17-24 (AHIDAGKT), 81-85 (DTPGH), and 135-138 (NKMD).

The protein belongs to the TRAFAC class translation factor GTPase superfamily. Classic translation factor GTPase family. EF-G/EF-2 subfamily.

It is found in the cytoplasm. In terms of biological role, catalyzes the GTP-dependent ribosomal translocation step during translation elongation. During this step, the ribosome changes from the pre-translocational (PRE) to the post-translocational (POST) state as the newly formed A-site-bound peptidyl-tRNA and P-site-bound deacylated tRNA move to the P and E sites, respectively. Catalyzes the coordinated movement of the two tRNA molecules, the mRNA and conformational changes in the ribosome. This Paramagnetospirillum magneticum (strain ATCC 700264 / AMB-1) (Magnetospirillum magneticum) protein is Elongation factor G.